A 117-amino-acid chain; its full sequence is ATP-dependent Clp protease adapter protein ClpS 1 (117 aa).

The protein belongs to the ClpS family. In terms of assembly, binds to the N-terminal domain of the chaperone ClpA.

Its function is as follows. Involved in the modulation of the specificity of the ClpAP-mediated ATP-dependent protein degradation. The chain is ATP-dependent Clp protease adapter protein ClpS 1 from Agrobacterium fabrum (strain C58 / ATCC 33970) (Agrobacterium tumefaciens (strain C58)).